A 339-amino-acid chain; its full sequence is DNA-directed RNA polymerase subunit alpha (339 aa).

The interval 1-238 is alpha N-terminal domain (alpha-NTD); the sequence is MVDPIVTKNW…EQLSIFINFD (238 aa). The tract at residues 255–339 is alpha C-terminal domain (alpha-CTD); that stretch reads LNENLFRSVD…KAAPQGAPKV (85 aa).

It belongs to the RNA polymerase alpha chain family. Homodimer. The RNAP catalytic core consists of 2 alpha, 1 beta, 1 beta' and 1 omega subunit. When a sigma factor is associated with the core the holoenzyme is formed, which can initiate transcription.

It catalyses the reaction RNA(n) + a ribonucleoside 5'-triphosphate = RNA(n+1) + diphosphate. Functionally, DNA-dependent RNA polymerase catalyzes the transcription of DNA into RNA using the four ribonucleoside triphosphates as substrates. This chain is DNA-directed RNA polymerase subunit alpha, found in Anaeromyxobacter sp. (strain Fw109-5).